We begin with the raw amino-acid sequence, 80 residues long: MNIYCRYSSLTLANFLCLLMKLSISCPNSLELKYLDIFCWKVVNGRVTTLSYNIYPFLERSVINGICFTELDTNRVPILR.

This is an uncharacterized protein from Vaccinia virus (strain Copenhagen) (VACV).